The following is a 400-amino-acid chain: Lysophospholipid transporter LplT (400 aa).

The next 12 membrane-spanning stretches (helical) occupy residues Val-19–Ala-39, Val-53–Ala-73, Ala-91–Ile-111, Leu-139–Ala-159, Ile-164–Ile-184, Ser-195–Trp-213, Leu-227–Leu-247, Tyr-257–Val-277, Thr-281–Leu-301, Ala-304–Val-324, Asn-352–Ala-372, and Val-373–Trp-393.

The protein belongs to the major facilitator superfamily. LplT (TC 2.A.1.42) family.

It is found in the cell inner membrane. Functionally, catalyzes the facilitated diffusion of 2-acyl-glycero-3-phosphoethanolamine (2-acyl-GPE) into the cell. The polypeptide is Lysophospholipid transporter LplT (Salmonella enteritidis PT4 (strain P125109)).